A 278-amino-acid polypeptide reads, in one-letter code: Large ribosomal subunit protein uL2 (278 aa).

The disordered stretch occupies residues 223 to 278 (GSVMNPNDHPHGGGEGKAPIGHPSPMSPWGKKTLGKKTRDHKAKSEKFIVRHRRAK). Over residues 255–264 (TLGKKTRDHK) the composition is skewed to basic residues.

The protein belongs to the universal ribosomal protein uL2 family. In terms of assembly, part of the 50S ribosomal subunit. Forms a bridge to the 30S subunit in the 70S ribosome.

One of the primary rRNA binding proteins. Required for association of the 30S and 50S subunits to form the 70S ribosome, for tRNA binding and peptide bond formation. It has been suggested to have peptidyltransferase activity; this is somewhat controversial. Makes several contacts with the 16S rRNA in the 70S ribosome. The chain is Large ribosomal subunit protein uL2 from Lacticaseibacillus paracasei (strain ATCC 334 / BCRC 17002 / CCUG 31169 / CIP 107868 / KCTC 3260 / NRRL B-441) (Lactobacillus paracasei).